We begin with the raw amino-acid sequence, 141 residues long: Nucleoside diphosphate kinase (141 aa).

Lys-9, Phe-57, Arg-85, Thr-91, Arg-102, and Asn-112 together coordinate ATP. His-115 acts as the Pros-phosphohistidine intermediate in catalysis.

Belongs to the NDK family. Homotetramer. The cofactor is Mg(2+).

The protein localises to the cytoplasm. It carries out the reaction a 2'-deoxyribonucleoside 5'-diphosphate + ATP = a 2'-deoxyribonucleoside 5'-triphosphate + ADP. The catalysed reaction is a ribonucleoside 5'-diphosphate + ATP = a ribonucleoside 5'-triphosphate + ADP. In terms of biological role, major role in the synthesis of nucleoside triphosphates other than ATP. The ATP gamma phosphate is transferred to the NDP beta phosphate via a ping-pong mechanism, using a phosphorylated active-site intermediate. The polypeptide is Nucleoside diphosphate kinase (Chlamydia trachomatis serovar D (strain ATCC VR-885 / DSM 19411 / UW-3/Cx)).